Here is a 466-residue protein sequence, read N- to C-terminus: uncharacterized protein (466 aa).

The Autotransporter domain occupies S178 to W466.

This is an uncharacterized protein from Escherichia coli (strain K12).